The primary structure comprises 156 residues: ATP synthase subunit b 1 (156 aa).

Residues 5–27 (FTLISQAMAFAIFIWFTVRFVWP) traverse the membrane as a helical segment.

This sequence belongs to the ATPase B chain family. In terms of assembly, F-type ATPases have 2 components, F(1) - the catalytic core - and F(0) - the membrane proton channel. F(1) has five subunits: alpha(3), beta(3), gamma(1), delta(1), epsilon(1). F(0) has three main subunits: a(1), b(2) and c(10-14). The alpha and beta chains form an alternating ring which encloses part of the gamma chain. F(1) is attached to F(0) by a central stalk formed by the gamma and epsilon chains, while a peripheral stalk is formed by the delta and b chains.

It is found in the cell inner membrane. Functionally, f(1)F(0) ATP synthase produces ATP from ADP in the presence of a proton or sodium gradient. F-type ATPases consist of two structural domains, F(1) containing the extramembraneous catalytic core and F(0) containing the membrane proton channel, linked together by a central stalk and a peripheral stalk. During catalysis, ATP synthesis in the catalytic domain of F(1) is coupled via a rotary mechanism of the central stalk subunits to proton translocation. Its function is as follows. Component of the F(0) channel, it forms part of the peripheral stalk, linking F(1) to F(0). The polypeptide is ATP synthase subunit b 1 (Nitrosospira multiformis (strain ATCC 25196 / NCIMB 11849 / C 71)).